The sequence spans 171 residues: Putative ankyrin repeat protein PA3287 (171 aa).

ANK repeat units lie at residues 48–77 (KGDSLLMLASYHGHADTVRLLLAYKADPDL), 81–110 (AGQTPLAGAAFKGDLAMVELLLAGGADVEG), and 114–143 (DGKTALMMAAMFNQAEVAASLLAHGARRDA).

The polypeptide is Putative ankyrin repeat protein PA3287 (Pseudomonas aeruginosa (strain ATCC 15692 / DSM 22644 / CIP 104116 / JCM 14847 / LMG 12228 / 1C / PRS 101 / PAO1)).